The chain runs to 321 residues: Glycolipid transfer protein domain-containing protein 2 (321 aa).

It belongs to the GLTP family.

The polypeptide is Glycolipid transfer protein domain-containing protein 2 (Gltpd2) (Mus musculus (Mouse)).